Consider the following 404-residue polypeptide: Chorismate synthase (404 aa).

Positions 43 and 49 each coordinate NADP(+). Residues 138–140, 259–260, Gly303, 318–322, and Arg344 each bind FMN; these read RAS, QA, and KPIST.

The protein belongs to the chorismate synthase family. Homotetramer. Requires FMNH2 as cofactor.

It catalyses the reaction 5-O-(1-carboxyvinyl)-3-phosphoshikimate = chorismate + phosphate. Its pathway is metabolic intermediate biosynthesis; chorismate biosynthesis; chorismate from D-erythrose 4-phosphate and phosphoenolpyruvate: step 7/7. Its function is as follows. Catalyzes the anti-1,4-elimination of the C-3 phosphate and the C-6 proR hydrogen from 5-enolpyruvylshikimate-3-phosphate (EPSP) to yield chorismate, which is the branch point compound that serves as the starting substrate for the three terminal pathways of aromatic amino acid biosynthesis. This reaction introduces a second double bond into the aromatic ring system. This Mycolicibacterium paratuberculosis (strain ATCC BAA-968 / K-10) (Mycobacterium paratuberculosis) protein is Chorismate synthase.